The primary structure comprises 641 residues: 1-deoxy-D-xylulose-5-phosphate synthase (641 aa).

Thiamine diphosphate-binding positions include histidine 79 and 120 to 122 (AHS). Aspartate 151 provides a ligand contact to Mg(2+). Thiamine diphosphate is bound by residues 152-153 (GS), asparagine 180, tyrosine 290, and glutamate 372. Asparagine 180 contacts Mg(2+).

This sequence belongs to the transketolase family. DXPS subfamily. As to quaternary structure, homodimer. Mg(2+) serves as cofactor. Thiamine diphosphate is required as a cofactor.

The enzyme catalyses D-glyceraldehyde 3-phosphate + pyruvate + H(+) = 1-deoxy-D-xylulose 5-phosphate + CO2. It participates in metabolic intermediate biosynthesis; 1-deoxy-D-xylulose 5-phosphate biosynthesis; 1-deoxy-D-xylulose 5-phosphate from D-glyceraldehyde 3-phosphate and pyruvate: step 1/1. In terms of biological role, catalyzes the acyloin condensation reaction between C atoms 2 and 3 of pyruvate and glyceraldehyde 3-phosphate to yield 1-deoxy-D-xylulose-5-phosphate (DXP). This is 1-deoxy-D-xylulose-5-phosphate synthase from Rhodopseudomonas palustris (strain BisB18).